Consider the following 84-residue polypeptide: uncharacterized protein (84 aa).

The region spanning Met-1 to Ile-83 is the LITAF domain. Zn(2+)-binding residues include Cys-21 and Cys-24. Residues Met-39–Cys-61 are membrane-binding amphipathic helix. Zn(2+) is bound by residues Cys-71 and Cys-74.

It localises to the host membrane. This is an uncharacterized protein from Dryophytes versicolor (chameleon treefrog).